Reading from the N-terminus, the 497-residue chain is MKKYWFNSMLSNKKLEQKCGLSKSMDGLDALGHTSGSEETIRKDADKKIPSWDSYSFSNIHYLNSLFDRRNLWSLISDHTFLVRNSNGDTYSVYFDIENQIFDIDNASSFLSELPSYLKSGSNNSNYYYSYYSMYDTQSNWNNHINSCIDSYLRFEISLNSDIYSDIDSYISSFICTESTSSIENCTESTSSIENGNSSIKTSSSYFNRIEKSNDFDLNTKYKQLWVQCENCYGLNYKKFFSSKMNICEYCGYHLKMSSSDRIELFIDPGTWEPMDEDMVSIDPIEFHSIDPIEFHSEEEPYIDRISFYQTKTGLTEAVQTGVGQLNSIPIAIGVMDFQFMGGSMGSVVGEKITRLIEYATNRSLPVIIVCASGGARMQEGALSLMQMAKISSASYDYQSNKKLFFVSILTSPTTGGVTASFGMLGDIIIAEPNAYIAFAGKRVIEQTLKKTVPDGLQVAEYLFHKGLFDPIVPRNPLKGVLNELFQLHGFLPLNQD.

In terms of domain architecture, CoA carboxyltransferase N-terminal spans 225–497 (LWVQCENCYG…LHGFLPLNQD (273 aa)). Zn(2+) contacts are provided by C229, C232, C248, and C251. The segment at 229 to 251 (CENCYGLNYKKFFSSKMNICEYC) adopts a C4-type zinc-finger fold.

The protein belongs to the AccD/PCCB family. As to quaternary structure, acetyl-CoA carboxylase is a heterohexamer composed of biotin carboxyl carrier protein, biotin carboxylase and 2 subunits each of ACCase subunit alpha and ACCase plastid-coded subunit beta (accD). Requires Zn(2+) as cofactor.

It localises to the plastid. Its subcellular location is the chloroplast stroma. It catalyses the reaction N(6)-carboxybiotinyl-L-lysyl-[protein] + acetyl-CoA = N(6)-biotinyl-L-lysyl-[protein] + malonyl-CoA. Its pathway is lipid metabolism; malonyl-CoA biosynthesis; malonyl-CoA from acetyl-CoA: step 1/1. Its function is as follows. Component of the acetyl coenzyme A carboxylase (ACC) complex. Biotin carboxylase (BC) catalyzes the carboxylation of biotin on its carrier protein (BCCP) and then the CO(2) group is transferred by the transcarboxylase to acetyl-CoA to form malonyl-CoA. This is Acetyl-coenzyme A carboxylase carboxyl transferase subunit beta, chloroplastic from Phalaenopsis aphrodite subsp. formosana (Moth orchid).